The primary structure comprises 429 residues: GTPase Obg (429 aa).

The Obg domain occupies 1–158 (MFVDQVKIYV…RNVQLELKVL (158 aa)). The interval 124–145 (RGNKRFATPANPAPELSENGEP) is disordered. The 171-residue stretch at 159–329 (ADVGLVGFPS…LLLAIADKLE (171 aa)) folds into the OBG-type G domain. Residues 165–172 (GFPSVGKS), 190–194 (FTTIV), 212–215 (DLPG), 282–285 (NKMD), and 310–312 (SAV) each bind GTP. Mg(2+)-binding residues include serine 172 and threonine 192. The OCT domain maps to 351-429 (KYVADEPDFE…LLDYEFEFMD (79 aa)).

The protein belongs to the TRAFAC class OBG-HflX-like GTPase superfamily. OBG GTPase family. Monomer. Mg(2+) serves as cofactor.

The protein resides in the cytoplasm. An essential GTPase which binds GTP, GDP and possibly (p)ppGpp with moderate affinity, with high nucleotide exchange rates and a fairly low GTP hydrolysis rate. Plays a role in control of the cell cycle, stress response, ribosome biogenesis and in those bacteria that undergo differentiation, in morphogenesis control. In Listeria monocytogenes serotype 4a (strain HCC23), this protein is GTPase Obg.